A 95-amino-acid polypeptide reads, in one-letter code: Large ribosomal subunit protein bL25 (95 aa).

The protein belongs to the bacterial ribosomal protein bL25 family. Part of the 50S ribosomal subunit; part of the 5S rRNA/L5/L18/L25 subcomplex. Contacts the 5S rRNA. Binds to the 5S rRNA independently of L5 and L18.

Functionally, this is one of the proteins that binds to the 5S RNA in the ribosome where it forms part of the central protuberance. The sequence is that of Large ribosomal subunit protein bL25 from Shewanella baltica (strain OS223).